Here is a 421-residue protein sequence, read N- to C-terminus: 2',3'-cyclic-nucleotide 3'-phosphodiesterase (421 aa).

2 positions are modified to phosphoserine: serine 6 and serine 9. Tyrosine 110 is subject to Phosphotyrosine. Position 170 is a phosphoserine (serine 170). Histidine 251 functions as the Proton acceptor in the catalytic mechanism. Threonine 253 is a binding site for substrate. The active-site Proton donor is histidine 330. Threonine 332 is a binding site for substrate. Position 359 is a phosphoserine (serine 359). The residue at position 418 (cysteine 418) is a Cysteine methyl ester. A lipid anchor (S-farnesyl cysteine) is attached at cysteine 418. Positions 419 to 421 are cleaved as a propeptide — removed in mature form; the sequence is TII.

This sequence belongs to the 2H phosphoesterase superfamily. CNPase family. As to quaternary structure, exists as monomers and homodimers.

It is found in the membrane. It localises to the melanosome. The catalysed reaction is a nucleoside 2',3'-cyclic phosphate + H2O = a nucleoside 2'-phosphate + H(+). Functionally, catalyzes the formation of 2'-nucleotide products from 2',3'-cyclic substrates. May participate in RNA metabolism in the myelinating cell, CNP is the third most abundant protein in central nervous system myelin. The chain is 2',3'-cyclic-nucleotide 3'-phosphodiesterase from Homo sapiens (Human).